A 98-amino-acid polypeptide reads, in one-letter code: NADH-ubiquinone oxidoreductase chain 4L (98 aa).

Transmembrane regions (helical) follow at residues 1-21 (MPFI…GLLM), 29-49 (SLLC…LLCL), and 61-81 (MILL…LVMV).

Belongs to the complex I subunit 4L family. Core subunit of respiratory chain NADH dehydrogenase (Complex I) which is composed of 45 different subunits.

The protein resides in the mitochondrion inner membrane. It catalyses the reaction a ubiquinone + NADH + 5 H(+)(in) = a ubiquinol + NAD(+) + 4 H(+)(out). Core subunit of the mitochondrial membrane respiratory chain NADH dehydrogenase (Complex I) which catalyzes electron transfer from NADH through the respiratory chain, using ubiquinone as an electron acceptor. Part of the enzyme membrane arm which is embedded in the lipid bilayer and involved in proton translocation. The sequence is that of NADH-ubiquinone oxidoreductase chain 4L (MT-ND4L) from Dugong dugon (Dugong).